A 137-amino-acid polypeptide reads, in one-letter code: Basic phospholipase A2 PeBP(R)-I/II (137 aa).

Residues 1 to 16 (MRTLWIMAVLLLGVEG) form the signal peptide. 7 cysteine pairs are disulfide-bonded: Cys42-Cys131, Cys44-Cys60, Cys59-Cys111, Cys65-Cys137, Cys66-Cys104, Cys73-Cys97, and Cys91-Cys102. His63 is a catalytic residue. Asp105 is a catalytic residue.

It belongs to the phospholipase A2 family. Group II subfamily. R49 sub-subfamily. As to expression, expressed by the venom gland.

It localises to the secreted. It carries out the reaction a 1,2-diacyl-sn-glycero-3-phosphocholine + H2O = a 1-acyl-sn-glycero-3-phosphocholine + a fatty acid + H(+). In terms of biological role, snake venom phospholipases A2 that have myotoxic, and edema-inducing activity, as well as extremely weak lipolytic activity. PLA2 catalyzes the calcium-dependent hydrolysis of the 2-acyl groups in 3-sn-phosphoglycerides. The protein is Basic phospholipase A2 PeBP(R)-I/II of Protobothrops elegans (Elegant pitviper).